A 311-amino-acid polypeptide reads, in one-letter code: 2-dehydro-3-deoxygluconokinase (311 aa).

Substrate contacts are provided by residues 34–35, 106–108, and Arg-166; these read GS and YYR. Residues 164–166, 224–229, 253–256, and Ser-283 contribute to the ATP site; these read NIR, KLGPKG, and GAGD. Substrate is bound by residues Gly-253 and Asp-256. Asp-256 functions as the Proton acceptor in the catalytic mechanism. A substrate-binding site is contributed by Asp-292.

The protein belongs to the carbohydrate kinase PfkB family. Homotetramer. The cofactor is a divalent metal cation.

It catalyses the reaction 2-dehydro-3-deoxy-D-gluconate + ATP = 2-dehydro-3-deoxy-6-phospho-D-gluconate + ADP + H(+). The protein operates within carbohydrate acid metabolism; 2-dehydro-3-deoxy-D-gluconate degradation; D-glyceraldehyde 3-phosphate and pyruvate from 2-dehydro-3-deoxy-D-gluconate: step 1/2. Involved in the degradation of glucose via the semi-phosphorylative Entner-Doudoroff pathway. Catalyzes the phosphorylation of 2-keto-3-deoxygluconate (KDG) to produce 2-keto-3-deoxy-6-phosphogluconate (KDPG). Can also use GTP, but not ADP or AMP, as a phosphoryl donor and 2-keto-D-gluconate (KG) as a phosphoryl acceptor. The chain is 2-dehydro-3-deoxygluconokinase from Sulfurisphaera tokodaii (strain DSM 16993 / JCM 10545 / NBRC 100140 / 7) (Sulfolobus tokodaii).